The following is a 512-amino-acid chain: Zinc finger CCCH-type with G patch domain-containing protein (512 aa).

The C3H1-type zinc-finger motif lies at 159–186; it reads QEMVPCAYFLEGDCKFNDEMCRFSHGEL. Residues 255 to 280 form a disordered region; sequence LEGDDVPSSDSESNSDSDEENEDDVV. Over residues 256–279 the composition is skewed to acidic residues; it reads EGDDVPSSDSESNSDSDEENEDDV. Residues 308 to 354 enclose the G-patch domain; that stretch reads TKGIGSKIMLKMGYVVGAGLGSKGEGIVVPVSAQVLPQGRSLDYCMQ. Residues 407 to 417 are compositionally biased toward low complexity; that stretch reads SSNGSSSSSGS. The segment at 407-432 is disordered; it reads SSNGSSSSSGSKKPAAKDNQMDLPSC.

It localises to the nucleus. In terms of biological role, transcription repressor. This chain is Zinc finger CCCH-type with G patch domain-containing protein, found in Aedes aegypti (Yellowfever mosquito).